A 248-amino-acid chain; its full sequence is Pyridoxine 5'-phosphate synthase (248 aa).

N9 is a binding site for 3-amino-2-oxopropyl phosphate. 11 to 12 provides a ligand contact to 1-deoxy-D-xylulose 5-phosphate; the sequence is DH. R20 provides a ligand contact to 3-amino-2-oxopropyl phosphate. H45 (proton acceptor) is an active-site residue. Residues R47 and H52 each coordinate 1-deoxy-D-xylulose 5-phosphate. The active-site Proton acceptor is E72. A 1-deoxy-D-xylulose 5-phosphate-binding site is contributed by T102. H193 functions as the Proton donor in the catalytic mechanism. 3-amino-2-oxopropyl phosphate-binding positions include G194 and 215-216; that span reads GH.

The protein belongs to the PNP synthase family. Homooctamer; tetramer of dimers.

The protein resides in the cytoplasm. It carries out the reaction 3-amino-2-oxopropyl phosphate + 1-deoxy-D-xylulose 5-phosphate = pyridoxine 5'-phosphate + phosphate + 2 H2O + H(+). It functions in the pathway cofactor biosynthesis; pyridoxine 5'-phosphate biosynthesis; pyridoxine 5'-phosphate from D-erythrose 4-phosphate: step 5/5. Its function is as follows. Catalyzes the complicated ring closure reaction between the two acyclic compounds 1-deoxy-D-xylulose-5-phosphate (DXP) and 3-amino-2-oxopropyl phosphate (1-amino-acetone-3-phosphate or AAP) to form pyridoxine 5'-phosphate (PNP) and inorganic phosphate. In Hydrogenovibrio crunogenus (strain DSM 25203 / XCL-2) (Thiomicrospira crunogena), this protein is Pyridoxine 5'-phosphate synthase.